Reading from the N-terminus, the 196-residue chain is Cilia- and flagella-associated protein 107 (196 aa).

Mn stretches follow at residues 46–61 and 96–108; these read TPQT…FPGH and ISTY…RHNY. The interval 168–196 is disordered; the sequence is YPRPPAGAMSRREHAIPVPPPRLQPVPHF. The segment covering 184–196 has biased composition (pro residues); it reads PVPPPRLQPVPHF.

In terms of assembly, microtubule inner protein component of sperm flagellar doublet microtubules. In terms of tissue distribution, expressed in trachea multiciliated cells.

Its subcellular location is the cytoplasm. It is found in the cytoskeleton. The protein resides in the cilium axoneme. The protein localises to the flagellum axoneme. Its function is as follows. Microtubule inner protein (MIP) part of the dynein-decorated doublet microtubules (DMTs) in cilia axoneme, which is required for motile cilia beating. The protein is Cilia- and flagella-associated protein 107 of Bos taurus (Bovine).